A 333-amino-acid chain; its full sequence is Cell shape-determining protein Mbl (333 aa).

ATP is bound by residues 12-14, 156-158, 204-207, and 284-287; these read TAN, GGT, EDIK, and GGAL.

The protein belongs to the FtsA/MreB family. Forms polymers.

Its subcellular location is the cytoplasm. Its function is as follows. Forms membrane-associated dynamic filaments that are essential for cell shape determination. Acts by regulating cell wall synthesis and cell elongation, and thus cell shape. A feedback loop between cell geometry and Mbl localization may maintain elongated cell shape by targeting cell wall growth to regions of negative cell wall curvature. The protein is Cell shape-determining protein Mbl of Bacillus cereus (strain ATCC 10987 / NRS 248).